Consider the following 55-residue polypeptide: Large ribosomal subunit protein bL33 (55 aa).

It belongs to the bacterial ribosomal protein bL33 family.

The protein is Large ribosomal subunit protein bL33 of Blochmanniella pennsylvanica (strain BPEN).